The chain runs to 341 residues: L-threonine 3-dehydrogenase (341 aa).

Cysteine 38 is a binding site for Zn(2+). Residues threonine 40 and histidine 43 each act as charge relay system in the active site. Positions 63, 64, 93, 96, 99, and 107 each coordinate Zn(2+). NAD(+) contacts are provided by residues isoleucine 175, aspartate 195, arginine 200, 262 to 264 (LGI), and 286 to 287 (IY).

Belongs to the zinc-containing alcohol dehydrogenase family. As to quaternary structure, homotetramer. Requires Zn(2+) as cofactor.

Its subcellular location is the cytoplasm. The enzyme catalyses L-threonine + NAD(+) = (2S)-2-amino-3-oxobutanoate + NADH + H(+). The protein operates within amino-acid degradation; L-threonine degradation via oxydo-reductase pathway; glycine from L-threonine: step 1/2. Functionally, catalyzes the NAD(+)-dependent oxidation of L-threonine to 2-amino-3-ketobutyrate. This is L-threonine 3-dehydrogenase from Pseudoalteromonas translucida (strain TAC 125).